Reading from the N-terminus, the 436-residue chain is GTPase Der (436 aa).

EngA-type G domains lie at 4–167 (PVVA…KNIP) and 176–351 (VQFC…ENHS). Residues 10–17 (GRPNVGKS), 57–61 (DTGGI), 119–122 (NKLD), 182–189 (GRPNVGKS), 229–233 (DTAGM), and 294–297 (NKWD) contribute to the GTP site. Residues 352-436 (LRVQTNVLND…PIKIFARARK (85 aa)) enclose the KH-like domain.

This sequence belongs to the TRAFAC class TrmE-Era-EngA-EngB-Septin-like GTPase superfamily. EngA (Der) GTPase family. As to quaternary structure, associates with the 50S ribosomal subunit.

Functionally, GTPase that plays an essential role in the late steps of ribosome biogenesis. The chain is GTPase Der from Bacillus velezensis (strain DSM 23117 / BGSC 10A6 / LMG 26770 / FZB42) (Bacillus amyloliquefaciens subsp. plantarum).